A 747-amino-acid chain; its full sequence is Homeobox-leucine zipper protein GLABRA 2 (747 aa).

Residues 31–112 (RNASSGSTNP…KKYHRHTTDQ (82 aa)) form a disordered region. Over residues 58–68 (EMSSENSGPTR) the composition is skewed to polar residues. The segment covering 73–90 (EDLEGEDHDDEEEEEEDG) has biased composition (acidic residues). Positions 97 to 107 (TNKRKRKKYHR) are enriched in basic residues. Residues 101-160 (KRKKYHRHTTDQIRHMEALFKETPHPDEKQRQQLSKQLGLAPRQVKFWFQNRRTQIKAIQ) constitute a DNA-binding region (homeobox). Residues 155 to 223 (QIKAIQERHE…LDKLRAALGR (69 aa)) are a coiled coil. Positions 250–489 (FALEKSRIAE…LQLHCERLVF (240 aa)) constitute an START domain.

It belongs to the HD-ZIP homeobox family. Class IV subfamily. As to quaternary structure, interacts with GIR1 and GIR2. As to expression, expressed in individual developing trichome cells of the emerging leaf primordia. Expressed in differentiating hairless cells of root epidermis.

Its subcellular location is the nucleus. In terms of biological role, transcription factor involved in the determination of epidermal cell identity. Required for correct morphological development and maturation of trichomes. Regulates the frequency of trichome initiation and determines trichome spacing. Acts as a negative factor for root hair development. Required for ectopic repression of root hair development in a subset of epidermal cells. May suppress hair formation in root epidermis by promoting differentiation into hairless epidermal cells. Directly suppresses the bHLH transcription factor genes, RHD6, RSL1, RSL2, LRL1, and LRL2, which have diverse functions in root hair development. Required for normal development of seed coat mucilage. Involved in the control of seed oil accumulation. Acts as a negative regulator of anthocyanin biosynthesis. May directly repress the expression of some component genes from the MYB-bHLH-WD40 (MBW) transcriptional activator complex. The MBW complex activates the transcription of late biosynthesis genes in the flavonoid pathway, leading to the production of anthocyanins. The polypeptide is Homeobox-leucine zipper protein GLABRA 2 (Arabidopsis thaliana (Mouse-ear cress)).